A 126-amino-acid chain; its full sequence is UPF0102 protein BCAN_A0183 (126 aa).

The protein belongs to the UPF0102 family.

The chain is UPF0102 protein BCAN_A0183 from Brucella canis (strain ATCC 23365 / NCTC 10854 / RM-666).